Consider the following 451-residue polypeptide: UPF0761 membrane protein Hhal_0704 (451 aa).

Helical transmembrane passes span 66–86, 122–142, 162–182, 204–224, 228–248, and 268–288; these read LLAI…FPVF, ELTA…LNTI, FMVY…SVAS, LLNL…YSLV, SVPV…FELA, and ALAA…VILI.

Belongs to the UPF0761 family.

The protein resides in the cell inner membrane. This chain is UPF0761 membrane protein Hhal_0704, found in Halorhodospira halophila (strain DSM 244 / SL1) (Ectothiorhodospira halophila (strain DSM 244 / SL1)).